The primary structure comprises 524 residues: MTAPDTDREEFVSLAGDADGPVVTHLVADLDVSVDPLAAYTTLADRSDYGFLLESAEKVSSSNPQGAFSAPATAADSHARFSFVGYDPEAVVTVGPDGVDVTDLGGPAAEFVGAGDGDVLDSLRGALPDLPRVNFPETDRQTLTGGLVGFLAYEAVYDLWLDEVGRERPDTDDPDAEFVLTTRTLSFDHREDAVRLVCTPVVSPDDDPGEVYDGVVAEAERVAEKLRAADDPAPGGFERTGEDAGSREEYEAAVRKTKEHVRDGDIYQGVISRTRKLRGQVDPVGLYASLREVNPSPYMFLLRHGDRRVVGASPETLVSVRGDRVVVNPIAGTCQRGSGPVEDRRLAGELLADAKERAEHTMLVDLGRNDVRRVSTPGSVRVEDFMSIIKYSHVQHIESTVSGTLDADADAFDATRATFPAGTLTGAPKVRAMEIIDDLEAEPRGVYGGGVGYYSWTGDADVAIVIRTATVDSGGADDAITVRAGAGIVADSDPTAEYEETEQKMGGVLDAVRRIEYGTEEASQ.

Residues Ser-55 and 297 to 299 (PYM) each bind L-tryptophan. 332-333 (GT) is a binding site for chorismate. Residue Glu-359 coordinates Mg(2+). Chorismate-binding positions include Tyr-447, Arg-467, 485 to 487 (GAG), and Gly-487. Mg(2+) is bound at residue Glu-500.

The protein belongs to the anthranilate synthase component I family. In terms of assembly, heterotetramer consisting of two non-identical subunits: a beta subunit (TrpG) and a large alpha subunit (TrpE). Requires Mg(2+) as cofactor.

The enzyme catalyses chorismate + L-glutamine = anthranilate + pyruvate + L-glutamate + H(+). The protein operates within amino-acid biosynthesis; L-tryptophan biosynthesis; L-tryptophan from chorismate: step 1/5. Its activity is regulated as follows. Feedback inhibited by tryptophan. In terms of biological role, part of a heterotetrameric complex that catalyzes the two-step biosynthesis of anthranilate, an intermediate in the biosynthesis of L-tryptophan. In the first step, the glutamine-binding beta subunit (TrpG) of anthranilate synthase (AS) provides the glutamine amidotransferase activity which generates ammonia as a substrate that, along with chorismate, is used in the second step, catalyzed by the large alpha subunit of AS (TrpE) to produce anthranilate. In the absence of TrpG, TrpE can synthesize anthranilate directly from chorismate and high concentrations of ammonia. This Haloferax volcanii (strain ATCC 29605 / DSM 3757 / JCM 8879 / NBRC 14742 / NCIMB 2012 / VKM B-1768 / DS2) (Halobacterium volcanii) protein is Anthranilate synthase component 1 (trpE).